A 289-amino-acid chain; its full sequence is O-methyltransferase asqN (289 aa).

Asp-155 contributes to the S-adenosyl-L-methionine binding site. His-195 acts as the Proton acceptor in catalysis.

Belongs to the class I-like SAM-binding methyltransferase superfamily. Cation-independent O-methyltransferase family.

It functions in the pathway secondary metabolite biosynthesis. The protein operates within alkaloid biosynthesis. Its pathway is mycotoxin biosynthesis. In terms of biological role, O-methyltransferase; part of the gene cluster that mediates the biosynthesis of the aspoquinolone mycotoxins. The role of asqN within the aspoquinolone pathway has still to be determined. The first step of the pathway is catalyzed by the nonribosomal peptide synthetase asqK that condenses anthranilic acid and O-methyl-L-tyrosine to produce 4'-methoxycyclopeptin. 4'-methoxycyclopeptin is then converted to 4'-methoxydehydrocyclopeptin by the ketoglutarate-dependent dioxygenase asqJ. AsqJ also converts its first product 4'-methoxydehydrocyclopeptin to 4'-methoxycyclopenin. The following conversion of 4'-methoxycyclopenin into 4'-methoxyviridicatin is catalyzed by the cyclopenase asqI. 4'-methoxyviridicatin is the precursor of quinolone natural products, and is further converted to quinolinone B. The prenyltransferase asqH1 then catalyzes the canonical Friedel-Crafts alkylation of quinolinone B with dimethylallyl cation to yield dimethylallyl quinolone, which is subjected to FAD-dependent dehydrogenation by the FAD-linked oxidoreductase asqF to yield conjugated aryl diene. The delta(3') double bond then serves as the site of the second alkylation with DMAPP catalyzed by the prenyltransferase asqH2 to yield a carbenium ion intermediate, which can be attacked by H(2)O to yield a styrenyl quinolone containing a C3'-hydroxyprenyl chain. The FAD-dependent monooxygenase asqG performs epoxidation of the terminal C7'-C8' olefin. Finally, after dehydratation of the epoxide at C3 by asqC, the quinolone epoxide rearrangement protein asqO catalyzes an enzymatic 3-exo-tet cyclization to yield the cyclopropyl-THF ring system in aspoquinolone. The polypeptide is O-methyltransferase asqN (Emericella nidulans (strain FGSC A4 / ATCC 38163 / CBS 112.46 / NRRL 194 / M139) (Aspergillus nidulans)).